Reading from the N-terminus, the 331-residue chain is Probable cytosolic iron-sulfur protein assembly protein Ciao1 (331 aa).

WD repeat units follow at residues 12–51 (GHKGRIWGVAWHPKGNSFASCGEDKAIRIWSLSGNTWTTK), 57–96 (GHKRTIREVRWSPCGEYLASASFDATTAIWSKHECTATLE), 97–136 (GHENEVKSVSWSRSGGLLATCSRDKSVWIWEVAGDDEFEC), 142–181 (AHSQDVKRVVWHPTKEILASASYDNTIKMYAESALDSDWD), 188–227 (SHTSTVWSIDFDADGERLVSCSDDATLKIWRAYHPGNEAG), 246–285 (LHTRAIYDVSWCKLTGLIASACGDDAIRIFKESSDSKRDA), and 297–331 (AHEQDVNAVEWNPVNVGQLISCSDDGTIKIWKLQE).

This sequence belongs to the WD repeat CIA1 family.

Its function is as follows. Essential component of the cytosolic iron-sulfur (Fe/S) protein assembly machinery. Required for the maturation of extramitochondrial Fe/S proteins. The sequence is that of Probable cytosolic iron-sulfur protein assembly protein Ciao1 from Drosophila mojavensis (Fruit fly).